The primary structure comprises 120 residues: SPbeta prophage-derived uncharacterized protein YosG (120 aa).

This is SPbeta prophage-derived uncharacterized protein YosG (yosG) from Bacillus subtilis (strain 168).